The chain runs to 101 residues: Protein PrgJ (101 aa).

To S.flexneri MxiI.

Its function is as follows. Required for invasion of epithelial cells. In Salmonella typhimurium (strain LT2 / SGSC1412 / ATCC 700720), this protein is Protein PrgJ (prgJ).